The chain runs to 173 residues: ATP synthase subunit b (173 aa).

A helical membrane pass occupies residues 15–35 (LYVGDMLFYAILFIVLMALIA).

Belongs to the ATPase B chain family. In terms of assembly, F-type ATPases have 2 components, F(1) - the catalytic core - and F(0) - the membrane proton channel. F(1) has five subunits: alpha(3), beta(3), gamma(1), delta(1), epsilon(1). F(0) has three main subunits: a(1), b(2) and c(10-14). The alpha and beta chains form an alternating ring which encloses part of the gamma chain. F(1) is attached to F(0) by a central stalk formed by the gamma and epsilon chains, while a peripheral stalk is formed by the delta and b chains.

Its subcellular location is the cell membrane. Functionally, f(1)F(0) ATP synthase produces ATP from ADP in the presence of a proton or sodium gradient. F-type ATPases consist of two structural domains, F(1) containing the extramembraneous catalytic core and F(0) containing the membrane proton channel, linked together by a central stalk and a peripheral stalk. During catalysis, ATP synthesis in the catalytic domain of F(1) is coupled via a rotary mechanism of the central stalk subunits to proton translocation. In terms of biological role, component of the F(0) channel, it forms part of the peripheral stalk, linking F(1) to F(0). This chain is ATP synthase subunit b, found in Pediococcus pentosaceus (strain ATCC 25745 / CCUG 21536 / LMG 10740 / 183-1w).